The following is a 236-amino-acid chain: MNTNKHVKTYMNSIVFDTAAVQAAAALQPIMETEAAQSAQVPHSSEAALQLMVETEAAQSVSAAPQEVANEILQDAGDTSARVITTTDALQVFSEAVQAIGEVIQETADGPHAIIEVKRAVFDATKMLAQLGTAVVKFYSPLFTAPERIVELVYSISLLVRIMKRIIKNDSLDKLTVDGLDSAATLLADVRSIIGDMFEVFVVNFRYAAPAEYFEAVDEMVHTVTDLALHVVKTVC.

The chain is OPEP-2 protein (OPEP-2) from Orgyia pseudotsugata (Douglas-fir tussock moth).